We begin with the raw amino-acid sequence, 394 residues long: MGEKDSETAPIWGKTRERERSNNNNIQPMDLESSSSVSGQQRSLTQSRSSYEERGRGVKEFRSWFPWLIPCFVVANVAVFVITMYVNNCPKKSGDCFADFLGRFSFQNTRENPLLGPSSLTLQTMGGLDVKKVVKGDEGWRLLSCNWLHGGVVHLLMNMLTLLFIGIRMEREFGFIRIGLLYLISGFGGSILSALFLRSNISVGASGAVFGLLGGMLSEIFINWTIYSNKVVTIVTLVLIVAVNLGLGVLPGVDNFAHIGGFATGFLLGFVLLIRPHYGWINQRNGPGAKPHRFKIYQGILWTISLLILVAGFIVGLISLFNNVDGNEHCSWCHYLSCVPTSKWSCNREPASCTTTQLGNQLSMTCLRNGKSASYILANPSDSRINSLCVQLCR.

The interval Met1 to Tyr51 is disordered. Polar residues predominate over residues Gly39–Ser49. Transmembrane regions (helical) follow at residues Trp64–Met84, Trp147–Ile167, Phe175–Leu195, Ile201–Phe221, Val231–Pro251, Asp254–Ile274, and Ile300–Leu320. Ser206 acts as the Nucleophile in catalysis. The active-site Charge relay system is His258.

It belongs to the peptidase S54 family.

The protein resides in the membrane. The enzyme catalyses Cleaves type-1 transmembrane domains using a catalytic dyad composed of serine and histidine that are contributed by different transmembrane domains.. Functionally, probable rhomboid-type serine protease that catalyzes intramembrane proteolysis. The polypeptide is RHOMBOID-like protein 4 (Arabidopsis thaliana (Mouse-ear cress)).